Reading from the N-terminus, the 283-residue chain is Circadian clock oscillator protein KaiA (283 aa).

Residues 1–146 (MAQSTALTIC…LFRLPALKES (146 aa)) form a psR domain, not required to form KaiA:KaiB:KaiC complex, or for a full KaiC phosphorylation cycle region. A KaiA N-terminal domain is found at 3–163 (QSTALTICGL…RLSQKLKERL (161 aa)). Residues 164–172 (GYLGVYYKR) are flexible linker. The KaiA C-terminal domain maps to 173–281 (DTAFFFRRMS…CEMYRRSIPR (109 aa)).

Belongs to the KaiA family. As to quaternary structure, homodimer. The KaiABC complex composition changes during the circadian cycle to control KaiC phosphorylation. Complexes KaiC(6), KaiA(2-4):KaiC(6), KaiB(6):KaiC(6) and KaiC(6):KaiB(6):KaiA(12) are among the most important forms, many form cooperatively. Binds to KaiB and KaiC, the N-terminus (pseudoreceiver domain PsR) is not required for either interaction. 1 KaiB binds to one subunit of the KaiA homodimer. KaiA and CikA bind to the same region of the KaiB(fs) form and therefore compete.

Functionally, key component of the KaiABC oscillator complex, which constitutes the main circadian regulator in cyanobacteria. Complex composition changes during the circadian cycle to control KaiC phosphorylation. KaiA stimulates KaiC autophosphorylation, while KaiB sequesters KaiA, leading to KaiC autodephosphorylation. KaiA binding to the KaiC CII domain during the subjective day yields KaiA(2-4):KaiC(6) complexes which stimulate KaiC autophosphorylation. Phospho-Ser-431 KaiC accumulation triggers binding of KaiB during the subjective night to form the KaiB(6):KaiC(6) complex, leading to changes in the output regulators CikA and SasA. KaiB(6):KaiC(6) formation exposes a site for KaiA binding on KaiB that sequesters KaiA from KaiC's CII domain, making the KaiC(6):KaiB(6):KaiA(12) complex resulting in KaiC autodephosphorylation. Complete dephosphorylation of KaiC leads to dissociation of KaiA(2):KaiB(1), completing 1 cycle of the Kai oscillator. Formation of the KaiB:KaiC complex is promoted by KaiA, helping switch KaiC from its autophosphorylation to autodephosphatase function. In terms of biological role, binds oxidized quinones via the N-terminal PsR domain, allowing it to sense redox changes and possibly mediate clock input. The protein is Circadian clock oscillator protein KaiA of Thermosynechococcus vestitus (strain NIES-2133 / IAM M-273 / BP-1).